We begin with the raw amino-acid sequence, 428 residues long: L-fucose-proton symporter (428 aa).

Helical transmembrane passes span 10–30, 51–71, 78–98, 100–120, 147–167, 204–224, 250–270, 288–308, 311–331, 339–359, 371–391, and 401–421; these read FIVP…ANDI, LVQL…ALFA, AGIL…WPAA, YEIF…LAFL, FNPL…LTNL, IALG…KMPA, EGVI…TFIV, IIAM…MKYL, EFML…VIFI, CLIL…GIAL, AGLV…GMII, and AVNF…IYGF.

Belongs to the major facilitator superfamily. FHS transporter (TC 2.A.1.7) family.

The protein localises to the cell inner membrane. The catalysed reaction is L-fucose(in) + H(+)(in) = L-fucose(out) + H(+)(out). Functionally, mediates the uptake of L-fucose across the boundary membrane with the concomitant transport of protons into the cell (symport system). This Haemophilus influenzae (strain ATCC 51907 / DSM 11121 / KW20 / Rd) protein is L-fucose-proton symporter (fucP).